A 444-amino-acid polypeptide reads, in one-letter code: ATP-dependent protease ATPase subunit HslU (444 aa).

ATP is bound by residues Ile-18 and 60-65 (GVGKTE). The disordered stretch occupies residues 143-163 (WGEVENHDSHSSTRQAFRKKL). Positions 257, 322, and 394 each coordinate ATP.

It belongs to the ClpX chaperone family. HslU subfamily. As to quaternary structure, a double ring-shaped homohexamer of HslV is capped on each side by a ring-shaped HslU homohexamer. The assembly of the HslU/HslV complex is dependent on binding of ATP.

The protein resides in the cytoplasm. Functionally, ATPase subunit of a proteasome-like degradation complex; this subunit has chaperone activity. The binding of ATP and its subsequent hydrolysis by HslU are essential for unfolding of protein substrates subsequently hydrolyzed by HslV. HslU recognizes the N-terminal part of its protein substrates and unfolds these before they are guided to HslV for hydrolysis. The polypeptide is ATP-dependent protease ATPase subunit HslU (Haemophilus influenzae (strain 86-028NP)).